Consider the following 209-residue polypeptide: NADH-ubiquinone oxidoreductase subunit 9 (209 aa).

Belongs to the complex I 30 kDa subunit family. As to quaternary structure, complex I is composed of about 30 different subunits.

Its subcellular location is the mitochondrion inner membrane. It catalyses the reaction a ubiquinone + NADH + 5 H(+)(in) = a ubiquinol + NAD(+) + 4 H(+)(out). Core subunit of the mitochondrial membrane respiratory chain NADH dehydrogenase (Complex I) that is believed to belong to the minimal assembly required for catalysis. Complex I functions in the transfer of electrons from NADH to the respiratory chain. The immediate electron acceptor for the enzyme is believed to be ubiquinone. This is NADH-ubiquinone oxidoreductase subunit 9 (NAD9) from Paramecium primaurelia.